The primary structure comprises 305 residues: LysM and putative peptidoglycan-binding domain-containing protein 3 (305 aa).

The Extracellular segment spans residues Met-1 to Gly-216. Residues Asn-7 and Asn-26 are each glycosylated (N-linked (GlcNAc...) asparagine). Position 55 is a phosphoserine (Ser-55). Residues Leu-65 to Ile-109 enclose the LysM domain. Asn-199 carries an N-linked (GlcNAc...) asparagine glycan. The helical transmembrane segment at Trp-217–Leu-237 threads the bilayer. Residues Tyr-238–Thr-305 are Cytoplasmic-facing. The segment at Val-253–Thr-305 is disordered. Basic and acidic residues predominate over residues Gln-286 to Thr-305.

It is found in the cell membrane. The protein localises to the golgi apparatus. Its function is as follows. Essential for Golgi structural integrity. The protein is LysM and putative peptidoglycan-binding domain-containing protein 3 (Lysmd3) of Mus musculus (Mouse).